Reading from the N-terminus, the 322-residue chain is uncharacterized protein (322 aa).

Disordered regions lie at residues 1 to 51 (MARS…GAWA) and 107 to 130 (QERQ…DRPD). The span at 119 to 130 (LHLEPGNEDRPD) shows a compositional bias: basic and acidic residues.

Expressed in skin and fetal lung.

This is an uncharacterized protein from Homo sapiens (Human).